The chain runs to 1302 residues: Multidrug resistance protein 1 (1302 aa).

The helical transmembrane segment at 43–63 threads the bilayer; it reads GVFEIILLIIGIIGSIGVGCL. One can recognise an ABC transmembrane type-1 1 domain in the interval 51–360; that stretch reads IIGIIGSIGV…ISTPINILNS (310 aa). The N-linked (GlcNAc...) asparagine glycan is linked to Asn83. 5 consecutive transmembrane segments (helical) span residues 118–138, 192–212, 213–233, 292–312, and 331–351; these read LYFA…FFVL, LFQT…KCWD, LTLV…GLGM, IGIG…NALG, and AGTV…LSQI. Residues 395–634 enclose the ABC transporter 1 domain; the sequence is IRFEDVQFVY…KGTYYGLVKR (240 aa). ATP is bound at residue 430-437; that stretch reads GASGCGKS. A glycan (N-linked (GlcNAc...) asparagine) is linked at Asn663. A helical transmembrane segment spans residues 712–732; the sequence is YIFCTLGLIGGIGAGAAFPFY. In terms of domain architecture, ABC transmembrane type-1 2 spans 713–1022; sequence IFCTLGLIGG…IGNVLPDVGK (310 aa). The N-linked (GlcNAc...) asparagine glycan is linked to Asn751. The helical transmembrane segment at 765 to 785 threads the bilayer; sequence MIIICIGIITMISFFCYVGLF. A glycan (N-linked (GlcNAc...) asparagine) is linked at Asn808. 2 helical membrane-spanning segments follow: residues 841–861 and 862–882; these read VGDI…GLYF and SWKL…FMFI. In terms of domain architecture, ABC transporter 2 spans 1057–1296; that stretch reads IEFKNIHFRY…KGFYYTLAMQ (240 aa). 1092-1099 lines the ATP pocket; sequence GASGCGKS.

Belongs to the ABC transporter superfamily. ABCB family. Multidrug resistance exporter (TC 3.A.1.201) subfamily.

It localises to the membrane. The enzyme catalyses ATP + H2O + xenobioticSide 1 = ADP + phosphate + xenobioticSide 2.. Energy-dependent efflux pump responsible for decreased drug accumulation in multidrug resistance parasites. The sequence is that of Multidrug resistance protein 1 from Entamoeba histolytica (strain ATCC 30459 / HM-1:IMSS / ABRM).